A 308-amino-acid polypeptide reads, in one-letter code: tRNA pseudouridine synthase B (308 aa).

The active-site Nucleophile is the Asp47.

The protein belongs to the pseudouridine synthase TruB family. Type 1 subfamily.

The catalysed reaction is uridine(55) in tRNA = pseudouridine(55) in tRNA. Its function is as follows. Responsible for synthesis of pseudouridine from uracil-55 in the psi GC loop of transfer RNAs. This is tRNA pseudouridine synthase B from Xanthomonas campestris pv. campestris (strain B100).